A 599-amino-acid chain; its full sequence is Elongation factor 4 (599 aa).

A tr-type G domain is found at 2–184; sequence KNIRNFSIIA…RLVRDIPPPQ (183 aa). GTP contacts are provided by residues 14-19 and 131-134; these read DHGKST and NKID.

This sequence belongs to the TRAFAC class translation factor GTPase superfamily. Classic translation factor GTPase family. LepA subfamily.

The protein localises to the cell inner membrane. The enzyme catalyses GTP + H2O = GDP + phosphate + H(+). Its function is as follows. Required for accurate and efficient protein synthesis under certain stress conditions. May act as a fidelity factor of the translation reaction, by catalyzing a one-codon backward translocation of tRNAs on improperly translocated ribosomes. Back-translocation proceeds from a post-translocation (POST) complex to a pre-translocation (PRE) complex, thus giving elongation factor G a second chance to translocate the tRNAs correctly. Binds to ribosomes in a GTP-dependent manner. The chain is Elongation factor 4 from Salmonella paratyphi A (strain ATCC 9150 / SARB42).